We begin with the raw amino-acid sequence, 573 residues long: Urease subunit alpha 1 (573 aa).

Residues 136-573 (GGIDTHVHFI…LPLAQRYFLF (438 aa)) form the Urease domain. Ni(2+)-binding residues include histidine 141, histidine 143, and lysine 224. At lysine 224 the chain carries N6-carboxylysine. A substrate-binding site is contributed by histidine 226. Ni(2+) is bound by residues histidine 253 and histidine 279. The Proton donor role is filled by histidine 327. A Ni(2+)-binding site is contributed by aspartate 367.

The protein belongs to the metallo-dependent hydrolases superfamily. Urease alpha subunit family. May form a heterohexamer of 3 UreC (alpha) and 3 UreAB (gamma/beta) subunits. May also form a heterotrimer of UreA (gamma), UreB (beta) and UreC (alpha) subunits. Three heterotrimers associate to form the active enzyme. Ni cation is required as a cofactor. Carboxylation allows a single lysine to coordinate two nickel ions.

Its subcellular location is the cytoplasm. It carries out the reaction urea + 2 H2O + H(+) = hydrogencarbonate + 2 NH4(+). The protein operates within nitrogen metabolism; urea degradation; CO(2) and NH(3) from urea (urease route): step 1/1. The protein is Urease subunit alpha 1 of Streptomyces coelicolor (strain ATCC BAA-471 / A3(2) / M145).